Consider the following 101-residue polypeptide: Protein RnfH (101 aa).

Belongs to the UPF0125 (RnfH) family.

In Coxiella burnetii (strain CbuG_Q212) (Coxiella burnetii (strain Q212)), this protein is Protein RnfH.